The chain runs to 220 residues: ATP phosphoribosyltransferase (220 aa).

Belongs to the ATP phosphoribosyltransferase family. Short subfamily. In terms of assembly, heteromultimer composed of HisG and HisZ subunits.

It is found in the cytoplasm. It catalyses the reaction 1-(5-phospho-beta-D-ribosyl)-ATP + diphosphate = 5-phospho-alpha-D-ribose 1-diphosphate + ATP. Its pathway is amino-acid biosynthesis; L-histidine biosynthesis; L-histidine from 5-phospho-alpha-D-ribose 1-diphosphate: step 1/9. Functionally, catalyzes the condensation of ATP and 5-phosphoribose 1-diphosphate to form N'-(5'-phosphoribosyl)-ATP (PR-ATP). Has a crucial role in the pathway because the rate of histidine biosynthesis seems to be controlled primarily by regulation of HisG enzymatic activity. The polypeptide is ATP phosphoribosyltransferase (Janthinobacterium sp. (strain Marseille) (Minibacterium massiliensis)).